Reading from the N-terminus, the 226-residue chain is Apoptosis regulator OPG045 (226 aa).

Belongs to the orthopoxvirus OPG045 family. As to quaternary structure, homodimer. Interacts with host pro-apoptotic protein BCL2L11 (via BH3 domain). Interacts with host NLRP1. Interacts with host BAK.

The protein resides in the host mitochondrion outer membrane. It is found in the host cytoplasm. In terms of biological role, plays a role in evading host innate immune response by inhibiting host inflammasome activation. Interacts with and inhibits NLR-mediated interleukin-1 beta/IL1B production in infected cells. At the host mitochondria outer membrane, interacts with the BH3 domain of host BAK and prevents BAK from binding active BAX. In turn, host apoptosis is inhibited. This Vaccinia virus (strain Copenhagen) (VACV) protein is Apoptosis regulator OPG045 (OPG045).